Consider the following 247-residue polypeptide: Carboxy-S-adenosyl-L-methionine synthase (247 aa).

Residues Tyr40, Gly65–Ser67, Asp90–Asn91, Asp122–Ile123, Asn137, and Arg204 each bind S-adenosyl-L-methionine.

This sequence belongs to the class I-like SAM-binding methyltransferase superfamily. Cx-SAM synthase family. Homodimer.

The enzyme catalyses prephenate + S-adenosyl-L-methionine = carboxy-S-adenosyl-L-methionine + 3-phenylpyruvate + H2O. In terms of biological role, catalyzes the conversion of S-adenosyl-L-methionine (SAM) to carboxy-S-adenosyl-L-methionine (Cx-SAM). This is Carboxy-S-adenosyl-L-methionine synthase from Pseudomonas syringae pv. syringae (strain B728a).